The sequence spans 129 residues: Large ribosomal subunit protein bL20 (129 aa).

Belongs to the bacterial ribosomal protein bL20 family.

In terms of biological role, binds directly to 23S ribosomal RNA and is necessary for the in vitro assembly process of the 50S ribosomal subunit. It is not involved in the protein synthesizing functions of that subunit. The chain is Large ribosomal subunit protein bL20 from Rhodococcus jostii (strain RHA1).